We begin with the raw amino-acid sequence, 590 residues long: Keratin, type II cytoskeletal 5 (590 aa).

Low complexity predominate over residues 1–18; sequence MSRQSSVSFRSGGSRSFS. The interval 1-20 is disordered; that stretch reads MSRQSSVSFRSGGSRSFSTA. The tract at residues 1–167 is head; the sequence is MSRQSSVSFR…DPSIQRVRTE (167 aa). Ser-5, Ser-8, Ser-16, and Ser-21 each carry phosphoserine. Thr-24 carries the post-translational modification Phosphothreonine; by CDK1. Residues Ser-26, Ser-36, Ser-50, Ser-64, Ser-71, Ser-75, and Ser-82 each carry the phosphoserine modification. A Phosphothreonine; by CDK1 modification is found at Thr-151. The coil 1A stretch occupies residues 168–203; it reads EREQIKTLNNKFASFIDKVRFLEQQNKVLDTKWTLL. Positions 168 to 481 constitute an IF rod domain; that stretch reads EREQIKTLNN…KLLEGEECRL (314 aa). A linker 1 region spans residues 204–222; it reads QEQGTKTVRQNLEPLFEQY. The segment at 223 to 315 is coil 1B; it reads INNLRRQLDS…FFDAELSQMQ (93 aa). Residues 316–338 are linker 12; the sequence is THVSDTSVVLSMDNNRNLDLDSI. Residues 339-477 form a coil 2 region; it reads IAEVKAQYEE…ATYRKLLEGE (139 aa). The tail stretch occupies residues 478-590; it reads ECRLSGEGVG…TSSSRKSFKS (113 aa). Residues 566–590 are disordered; sequence GSGGGSSSSVKFVSTTSSSRKSFKS. The segment covering 572-590 has biased composition (low complexity); it reads SSSVKFVSTTSSSRKSFKS.

Belongs to the intermediate filament family. As to quaternary structure, heterodimer of a type I and a type II keratin. Heterodimer with type I keratin KRT25 leading to the formation of keratin intermediate filament (KIF) network. Forms a heterodimer (via 2B domains) with KRT14 (via 2B domains). Interacts with PLEC isoform 1C, when in a heterodimer with KRT14. Interacts with TCHP. Interacts with EPPK1. Interacts with AMELX. Interacts with PKP1 (via N-terminus) and PKP2. In terms of processing, phosphorylated by CDK1, AURKB and Rho-kinase, phosphorylation is regulated by the cell cycle. Thr-24 phosphorylation, mediated by CDK1, peaks during prometaphase or metaphase cells with phosphorylated filamentous structures evident throughout the cytoplasm during early mitosis. CDK1 phosphorylates Thr-24 in mitotic cells at the site of injury. Post-translationally, O-glycosylated. In terms of tissue distribution, expressed in corneal epithelium (at protein level). Expressed in keratinocytes (at protein level).

The protein localises to the cytoplasm. Its function is as follows. Required for the formation of keratin intermediate filaments in the basal epidermis and maintenance of the skin barrier in response to mechanical stress. Regulates the recruitment of Langerhans cells to the epidermis, potentially by modulation of the abundance of macrophage chemotactic cytokines, macrophage inflammatory cytokines and CTNND1 localization in keratinocytes. In Homo sapiens (Human), this protein is Keratin, type II cytoskeletal 5 (KRT5).